A 196-amino-acid polypeptide reads, in one-letter code: Beta-crystallin A4 (196 aa).

Residue Thr-2 is modified to N-acetylthreonine. The interval 2-11 is N-terminal arm; sequence TLQCTKSAGH. 2 Beta/gamma crystallin 'Greek key' domains span residues 12–51 and 52–98; these read WRVV…KVLS and GAWV…RPVA. The connecting peptide stretch occupies residues 99 to 104; the sequence is CANHRD. Beta/gamma crystallin 'Greek key' domains lie at 105–146 and 147–195; these read SRLT…HVQS and GAWV…RRIQ.

As to quaternary structure, homo/heterodimer, or complexes of higher-order. The structure of beta-crystallin oligomers seems to be stabilized through interactions between the N-terminal arms.

In terms of biological role, crystallins are the dominant structural components of the vertebrate eye lens. This chain is Beta-crystallin A4 (Cryba4), found in Rattus norvegicus (Rat).